We begin with the raw amino-acid sequence, 447 residues long: Probable arabinosyltransferase ARAD1 (447 aa).

Topologically, residues 1-6 (MARKSS) are cytoplasmic. A helical; Signal-anchor for type II membrane protein membrane pass occupies residues 7 to 29 (LLKRAAIAVVSVIAIYVILNASV). Over 30–447 (SRSLPSSSDL…TNQTGLITSI (418 aa)) the chain is Lumenal. The span at 32 to 41 (SLPSSSDLPR) shows a compositional bias: low complexity. The disordered stretch occupies residues 32–52 (SLPSSSDLPRQLIREDDDDEG). N427, N432, and N439 each carry an N-linked (GlcNAc...) asparagine glycan.

It belongs to the glycosyltransferase 47 family. Homodimer and heterodimer with ARAD2. As to expression, expressed in root vasculature, cotyledons, leaves, stems, vascular tissue of sepals, petals and stamens, pollen grains, mature siliques and abscission region of seeds.

The protein resides in the golgi apparatus membrane. Its function is as follows. Probable arabinosyl transferase responsible for the polymerization of arabinose into the arabinan of arabinogalactan. May function as inverting enzyme using UDP-beta-L-arabinopyranoside. May be important for arabinan side chains of rhamnogalacturonan I (RG-I), a major component of pectins. Cell wall pectic arabinans are involved in thigmomorphogenesis response of inflorescence stems to mechanical stress. This chain is Probable arabinosyltransferase ARAD1 (ARAD1), found in Arabidopsis thaliana (Mouse-ear cress).